A 714-amino-acid polypeptide reads, in one-letter code: MDTVSAFKLEVRADKIAVITIDAPGEKMNTLKAEFGSQVRGLIRQLRDDKSVRGVVFISAKADNFIAGADINMIARCRSAQEAEALARQGQQIMAEIHGLSIPVIAAIHGACLGGGLELALACHGRICSDDEKTRLGLPEVQLGLLPGSGGTQRLPRLIGVSTALDMMLTGKQLRPRQALKAGLVDEVVPQAILLQAAVELALKGRPTSREVPVRERVLAGPLGRHLLFQFVGKQTQRKTQGNYPAVKRILQVVENGLAHGCSSGYAEEARAFGELAMSPQSQALRSIFFASTDLKKDPGAEAGPGSLRSVAVLGGGLMGGGIAYVTACKGGLPVRIKDIQPRGINHALKYSWDLLNKQVRQRRLRPVERDRQMALISGTTDYQGFAHRDVVIEAVFEDLALKQRMVSEVEQYGGPQTIFASNTSSLPIGDIAAHASRPGQVIGLHFFSPVEKMPLVEMIPHKGTDPQTIATVVQLAKRQGKTPIVVADKAGFYVNRILAPYINEAMRLLVEGEPIEVIDNALVKFGFPVGPIQLLDEVGIDTGTKIIPVLESAFGERFSPPANIIDAILKDDRKGRKNNRGFYLYETKGRKSKKRPDPAVYPLLGIGRPQSRLSAQQVAERCVMMMLNEAARCFDEQIIRSARDGDIGAVFGIGFPPFLGGPFRYMDTIGAGEVAAILQRLAAQFGPRFTPCDTLLRMAEQGTTFWPADERLT.

The tract at residues M1–P190 is enoyl-CoA hydratase. Residues G306–T714 form a 3-hydroxyacyl-CoA dehydrogenase region.

The protein in the N-terminal section; belongs to the enoyl-CoA hydratase/isomerase family. This sequence in the central section; belongs to the 3-hydroxyacyl-CoA dehydrogenase family. In terms of assembly, heterotetramer of two alpha chains (FadJ) and two beta chains (FadI).

It localises to the cytoplasm. The catalysed reaction is a (3S)-3-hydroxyacyl-CoA = a (2E)-enoyl-CoA + H2O. It catalyses the reaction a 4-saturated-(3S)-3-hydroxyacyl-CoA = a (3E)-enoyl-CoA + H2O. The enzyme catalyses a (3S)-3-hydroxyacyl-CoA + NAD(+) = a 3-oxoacyl-CoA + NADH + H(+). It carries out the reaction (3S)-3-hydroxybutanoyl-CoA = (3R)-3-hydroxybutanoyl-CoA. Its pathway is lipid metabolism; fatty acid beta-oxidation. Catalyzes the formation of a hydroxyacyl-CoA by addition of water on enoyl-CoA. Also exhibits 3-hydroxyacyl-CoA epimerase and 3-hydroxyacyl-CoA dehydrogenase activities. The chain is Fatty acid oxidation complex subunit alpha from Klebsiella pneumoniae subsp. pneumoniae (strain ATCC 700721 / MGH 78578).